The chain runs to 250 residues: MKILLSNDDGVYAQGIHALADALRDLAEIVIVAPDRNRSGASNSLTLEHPLRVSQIAENTYSVQGTPTDCVHFALNELMKDALPDLVLSGINHGANLGDDVLYSGTVAAAMEGHFLGVQSIAFSLAGTTHFASAAHFVRQLVEQHLANPIPTNRLLNVNIPDRPLELIQGIEVTRLGARHHAESMIKQKDPRGHDIYWLGPPGKEQDAGPGTDFHAIERGWVSLTPLQVDLTAHESLRSMDHWLKEKVNG.

Asp8, Asp9, Ser39, and Asn92 together coordinate a divalent metal cation.

The protein belongs to the SurE nucleotidase family. It depends on a divalent metal cation as a cofactor.

The protein localises to the cytoplasm. It catalyses the reaction a ribonucleoside 5'-phosphate + H2O = a ribonucleoside + phosphate. Functionally, nucleotidase that shows phosphatase activity on nucleoside 5'-monophosphates. The chain is 5'-nucleotidase SurE from Vibrio cholerae serotype O1 (strain ATCC 39315 / El Tor Inaba N16961).